The sequence spans 711 residues: Far upstream element-binding protein 2 (711 aa).

The segment at 1-147 (MSDYSTGGPP…HPPPRTSMTE (147 aa)) is disordered. The residue at position 2 (serine 2) is an N-acetylserine. Residues 8 to 17 (GPPPGPPPPA) are compositionally biased toward pro residues. 2 stretches are compositionally biased toward gly residues: residues 18-28 (GGGGGAGGAGG) and 36-68 (GAGD…GGPG). Arginine 40 is modified (omega-N-methylarginine). Position 87 is an N6-acetyllysine (lysine 87). Serine 99 is subject to Phosphoserine. Threonine 100 is modified (phosphothreonine). Over residues 110-122 (RQLEDGDQPESKK) the composition is skewed to basic and acidic residues. Lysine 121 participates in a covalent cross-link: Glycyl lysine isopeptide (Lys-Gly) (interchain with G-Cter in SUMO1); alternate. Lysine 121 participates in a covalent cross-link: Glycyl lysine isopeptide (Lys-Gly) (interchain with G-Cter in SUMO2); alternate. 7 positions are modified to phosphoserine: serine 125, serine 129, serine 131, serine 181, serine 184, serine 193, and serine 274. 3 consecutive KH domains span residues 144–208 (SMTE…KMML), 233–299 (GTVQ…CEMV), and 322–386 (GGGI…ARII). The tract at residues 392-429 (SLRSGPPGPPGGPGMPPGGRGRGRGQGNWGPPGGEMTF) is disordered. The segment covering 397 to 407 (PPGPPGGPGMP) has biased composition (pro residues). Over residues 408 to 424 (PGGRGRGRGQGNWGPPG) the composition is skewed to gly residues. Arginine 411, arginine 413, arginine 415, and arginine 442 each carry omega-N-methylarginine. Residues 424–491 (GGEMTFSIPT…QQIDHAKQLI (68 aa)) enclose the KH 4 domain. At serine 480 the chain carries Phosphoserine. A disordered region spans residues 497–569 (GPLCPVGPGP…HDPSKAAAAA (73 aa)). Composition is skewed to pro residues over residues 501–520 (PVGP…PFNP) and 528–542 (PGAP…PHQY). The stretch at 571-582 (DPNAAWAAYYSH) is repeat 1. Residues 571 to 684 (DPNAAWAAYY…SAAWAEYYRQ (114 aa)) are 4 X 12 AA imperfect repeats. Positions 583-711 (YYQQPPGPVP…PTQQGQQQAQ (129 aa)) are disordered. Residues 587-613 (PPGPVPGPAPAPAAPPAQGEPPQPPPT) show a composition bias toward pro residues. 3 tandem repeats follow at residues 617-628 (DYTKAWEEYYKK), 643-654 (DYTKAWEEYYKK), and 673-684 (DYSAAWAEYYRQ).

It belongs to the KHSRP family. In terms of assembly, part of a ternary complex containing FUBP2, PTBP1, PTBP2 and HNRPH1. Interacts with PARN. Interacts with PQBP1. In terms of processing, phosphorylation at Ser-193 leads to the unfolding of the unstable KH domain 1, creating a site for 14-3-3 YWHAZ binding, which promotes nuclear localization and impairs the RNA degradation function. In terms of tissue distribution, detected in neural and non-neural cell lines.

The protein resides in the nucleus. Its subcellular location is the cytoplasm. Binds to the dendritic targeting element and may play a role in mRNA trafficking. Part of a ternary complex that binds to the downstream control sequence (DCS) of the pre-mRNA. Mediates exon inclusion in transcripts that are subject to tissue-specific alternative splicing. May interact with single-stranded DNA from the far-upstream element (FUSE). May activate gene expression. Also involved in degradation of inherently unstable mRNAs that contain AU-rich elements (AREs) in their 3'-UTR, possibly by recruiting degradation machinery to ARE-containing mRNAs. This chain is Far upstream element-binding protein 2 (KHSRP), found in Homo sapiens (Human).